Reading from the N-terminus, the 191-residue chain is MQYDIASIIQGYAQGYFLMADDNDCLGWYGSRDRTLIPLDERFRYPKSLQRVLNQERFTVAINRDFAAVVAGCANRESTWISQELQEIYWLLHQTGYAYSFETWQGEELAGGILGIVIGGAFIGESMFYRIPEGSKVAMVKLVERLRQREFVMFDAQMMNPHLERFGAYRIKDKEYKTLLEKALLSSSTLI.

Belongs to the L/F-transferase family.

The protein resides in the cytoplasm. The catalysed reaction is N-terminal L-lysyl-[protein] + L-leucyl-tRNA(Leu) = N-terminal L-leucyl-L-lysyl-[protein] + tRNA(Leu) + H(+). It catalyses the reaction N-terminal L-arginyl-[protein] + L-leucyl-tRNA(Leu) = N-terminal L-leucyl-L-arginyl-[protein] + tRNA(Leu) + H(+). It carries out the reaction L-phenylalanyl-tRNA(Phe) + an N-terminal L-alpha-aminoacyl-[protein] = an N-terminal L-phenylalanyl-L-alpha-aminoacyl-[protein] + tRNA(Phe). In terms of biological role, functions in the N-end rule pathway of protein degradation where it conjugates Leu, Phe and, less efficiently, Met from aminoacyl-tRNAs to the N-termini of proteins containing an N-terminal arginine or lysine. The polypeptide is Leucyl/phenylalanyl-tRNA--protein transferase (Trichormus variabilis (strain ATCC 29413 / PCC 7937) (Anabaena variabilis)).